The following is a 438-amino-acid chain: DEAD-box ATP-dependent RNA helicase CshB (438 aa).

A Q motif motif is present at residues 4–32; it reads TKFELYELKPFIIDAVHRLGFYEPTDIQK. Residues 35-208 form the Helicase ATP-binding domain; it reads IPAVLKKESV…KKYMENPKYA (174 aa). Position 48 to 55 (48 to 55) interacts with ATP; it reads SQTGTGKT. The DEAD box signature appears at 156–159; that stretch reads DEAD. The Helicase C-terminal domain occupies 235-385; it reads LLFDIMSHLN…EWKKGDDRQR (151 aa). The tract at residues 380 to 438 is disordered; that stretch reads GDDRQRRKKRKKTPNEADEIAHRLVKKPKKVKPGYKKKMSYEMEKIKKKQRRNQSKKRK. Over residues 392 to 401 the composition is skewed to basic and acidic residues; the sequence is TPNEADEIAH. 2 stretches are compositionally biased toward basic residues: residues 402–417 and 425–438; these read RLVKKPKKVKPGYKKK and IKKKQRRNQSKKRK.

The protein belongs to the DEAD box helicase family. Interacts with CspB when cells are transcriptionally active. May interact with RNA helicases CshA and DbpA (DeaD), may be a component of a possible RNA degradosome complex composed of rny, rnja, rnjb, pnp, pfkA and eno (although rnjA and rnjB's presence is unclear). Specifically interacts with pnp and rny.

Its subcellular location is the cytoplasm. The protein localises to the nucleoid. It catalyses the reaction ATP + H2O = ADP + phosphate + H(+). Functionally, DEAD-box RNA helicase that plays a role in 70S ribosome assembly. May work in conjunction with the cold shock proteins to ensure proper initiation of transcription at low and optimal temperatures. In Bacillus subtilis (strain 168), this protein is DEAD-box ATP-dependent RNA helicase CshB.